Consider the following 276-residue polypeptide: Undecaprenyl-diphosphatase 2 (276 aa).

The next 7 helical transmembrane spans lie at I3–P23, A48–F68, L92–E112, L119–A139, A196–I216, D225–V245, and I255–F275.

Belongs to the UppP family.

It localises to the cell membrane. It carries out the reaction di-trans,octa-cis-undecaprenyl diphosphate + H2O = di-trans,octa-cis-undecaprenyl phosphate + phosphate + H(+). Its function is as follows. Catalyzes the dephosphorylation of undecaprenyl diphosphate (UPP). Confers resistance to bacitracin. The protein is Undecaprenyl-diphosphatase 2 of Bacillus licheniformis (strain ATCC 14580 / DSM 13 / JCM 2505 / CCUG 7422 / NBRC 12200 / NCIMB 9375 / NCTC 10341 / NRRL NRS-1264 / Gibson 46).